A 1077-amino-acid polypeptide reads, in one-letter code: MESSRSLLGCLASATAAPPGDDATGAGAEEEEDEEEAAAELGSHAALPYWTAVFEYEAAGEDELTLRLGDVVEVLSKDSQVSGDEGWWTGQLNQRVGIFPSNYVTPRSAFSSRCQPGAEDPSCYPPIQLLEIDFAELTLEEIIGIGGFGKVYRAFWAGDEVAVKAARHDPDEDISQTIENVRQEAKLFAMLKHPNIIALRGVCLKEPNLCLVMEFARGGPLNRVLSGKRIPPDILVNWAVQIARGMNYLHDEAIVPIIHRDLKSSNILILQKVENGDLSNKILKITDFGLAREWHRTTKMSAAGTYAWMAPEVIRASMFSKGSDVWSYGVLLWELLTGEVPFRGIDGLAVAYGVAMNKLALPIPSTCPEPFAKLMEDCWNPDPHSRPSFTSILDQLTTIEESGFFEMPKDSFHCLQDDWKHEIQEMFDQLRAKEKELRTWEEELTRAALQQKNQEELLRRREQELAEREIDILERELNIIIHQLCQEKPRVKKRKGKFRKSRLKLKDGNRISLPSDFQHKFTVQASPTMDKRKSLISNRSSPPASPTIIPRLRAIQLTPGESSKTWGRSSVVPKEEGEEEEKRAPKKKGRTWGPGTLGQKELTSGDEGLKSLVDGYKQWSSSAPNLGKGPRSSPALPGFTSLMEIEDEDSEGPGSGENHQQHSPNQSYLCIPFPRGEDGDGPSSDGVHEEPTPVNSATSTPQLTPTNSLKRGGTHHRRCEVALLGCGAVLAATGLGFDLLEAGKCQLLPPEEPEPPAREEKKRREGLFQRASRPRRSTSPPSRKLFKKEEPMTLLGDPSASLTLLSLSSISECNSTRSLLRSDSDEIVVYEMPVSPVEAPPLTQCTHNPLVNVRVERFKRDPNQSLTPTHVTLTAPTQPSGHRRTPSDGALKPTAAPAVLGSRSPSSNGMSPSPGTGMLKTPSPSRDPGEFPRLPDPNVVFPPTPRRWNTQRDSTLERPKTLEFLPRPRPSANRQRLDPWWFVSPSHARSASPANSSSTETPSNLDSCFASSSSTVEERPGLPALLPLQAGPLLPAERTLLDLDAEGQSQDSTVPLCRAELNAHGPSPYEIQQEFWS.

Positions methionine 1–glutamate 40 are disordered. The segment covering alanine 14–glycine 27 has biased composition (low complexity). Residues alanine 28–alanine 38 show a composition bias toward acidic residues. Positions alanine 45 to alanine 109 constitute an SH3 domain. The Protein kinase domain maps to leucine 137–phenylalanine 405. Residues isoleucine 143–valine 151 and lysine 164 contribute to the ATP site. Aspartate 261 functions as the Proton acceptor in the catalytic mechanism. Phosphothreonine; by autocatalysis occurs at positions 297 and 298. Serine 301 is modified (phosphoserine; by autocatalysis). Residue threonine 305 is modified to Phosphothreonine; by autocatalysis. 2 leucine-zipper regions span residues isoleucine 423 to leucine 444 and leucine 458 to isoleucine 479. The segment covering valine 491–leucine 503 has biased composition (basic residues). 6 disordered regions span residues valine 491–isoleucine 511, serine 526–aspartate 606, glutamate 646–glycine 713, leucine 748–glutamate 790, arginine 860–serine 971, and serine 986–serine 1011. Serine 526 is subject to Phosphoserine. Polar residues-rich tracts occupy residues proline 559–arginine 568 and proline 693–leucine 709. Residues proline 755–leucine 767 are compositionally biased toward basic and acidic residues. The segment covering asparagine 863–serine 880 has biased composition (polar residues). Over residues glycine 901–glycine 915 the composition is skewed to low complexity. Residues histidine 987 to serine 1011 show a composition bias toward polar residues.

It belongs to the protein kinase superfamily. STE Ser/Thr protein kinase family. MAP kinase kinase kinase subfamily. In terms of assembly, homodimer. Requires Mg(2+) as cofactor. Post-translationally, autophosphorylation on serine and threonine residues within the activation loop plays a role in enzyme activation. Thr-305 is likely to be the main autophosphorylation site. Autophosphorylation also occurs on Thr-297 and Ser-301. In terms of tissue distribution, expressed in cochlea and utricle.

The enzyme catalyses L-seryl-[protein] + ATP = O-phospho-L-seryl-[protein] + ADP + H(+). It carries out the reaction L-threonyl-[protein] + ATP = O-phospho-L-threonyl-[protein] + ADP + H(+). Homodimerization via the leucine zipper domains is required for autophosphorylation of multiple sites in the activation loop and subsequent activation. Autophosphorylation at Thr-305 is the key step in activation of MAP3K9/MLK1 and is required for full phosphorylation. Autophosphorylation at Thr-297 and Ser-301 have been shown to be of secondary importance in the activation of MAP3K9/MLK1. In terms of biological role, serine/threonine kinase which acts as an essential component of the MAP kinase signal transduction pathway. Plays an important role in the cascades of cellular responses evoked by changes in the environment. Once activated, acts as an upstream activator of the MKK/JNK signal transduction cascade through the phosphorylation of MAP2K4/MKK4 and MAP2K7/MKK7 which in turn activate the JNKs. The MKK/JNK signaling pathway regulates stress response via activator protein-1 (JUN) and GATA4 transcription factors. Also plays a role in mitochondrial death signaling pathway, including the release cytochrome c, leading to apoptosis. In Mus musculus (Mouse), this protein is Mitogen-activated protein kinase kinase kinase 9 (Map3k9).